A 251-amino-acid chain; its full sequence is DNA repair protein RecO (251 aa).

This sequence belongs to the RecO family.

Functionally, involved in DNA repair and RecF pathway recombination. The sequence is that of DNA repair protein RecO from Acidiphilium cryptum (strain JF-5).